An 857-amino-acid polypeptide reads, in one-letter code: Protein sip-5 (857 aa).

6 disordered regions span residues 1–81, 157–231, 384–416, 466–517, 545–747, and 763–857; these read MGNA…ARRL, GLPI…FKPT, SESSVNSGSLSPGVASPGGRRRNQSLSANAPNV, FGRR…GNRR, KAEK…PMFN, and HAGK…QVTL. Basic and acidic residues-rich tracts occupy residues 7–16 and 36–48; these read KESRGDDSGR and ESSRRNRNTRHDL. Residues 49-61 show a composition bias toward low complexity; the sequence is TGLLGRAAGGSSS. Residues 62–81 show a composition bias toward basic and acidic residues; sequence HADERHERKETKQEREARRL. Composition is skewed to polar residues over residues 179–191 and 199–208; these read ASPTDASSNTNHL and SLSTASEHST. Low complexity-rich tracts occupy residues 209–230, 384–394, and 476–504; these read SNAGSALPSPGSGKGSSSPFKP, SESSVNSGSLS, and SASATPGNGDENRGTGPATPANAGATANT. Residues 545–572 are compositionally biased toward basic and acidic residues; the sequence is KAEKEEQKEAKKREKEREKAEKKAEKAA. 2 stretches are compositionally biased toward low complexity: residues 586 to 604 and 621 to 645; these read SRSGHSSASGSSLSLPGLS and ASVASAMASTGAAMTTPAAPGALAP. Positions 648-657 are enriched in basic and acidic residues; that stretch reads STKDKGKAVD. The segment covering 688–697 has biased composition (low complexity); it reads SSASSASSSA. Polar residues predominate over residues 698–712; the sequence is VESNQGSYVPPSNLQ. Over residues 783-799 the composition is skewed to basic and acidic residues; sequence ETAKSGEGAGEHVEHVL. Polar residues-rich tracts occupy residues 800–838 and 845–857; these read DSQTTGISEQDSEINSQPPRLTVTLDSPATSVGDVSTAS and NETTVEHATQVTL.

The protein belongs to the SIP5 family.

The protein localises to the cytoplasm. In terms of biological role, may negatively regulate the snf-1 kinase. The chain is Protein sip-5 (sip-5) from Neurospora crassa (strain ATCC 24698 / 74-OR23-1A / CBS 708.71 / DSM 1257 / FGSC 987).